Consider the following 185-residue polypeptide: Ribosome-recycling factor (185 aa).

The protein belongs to the RRF family.

The protein localises to the cytoplasm. Its function is as follows. Responsible for the release of ribosomes from messenger RNA at the termination of protein biosynthesis. May increase the efficiency of translation by recycling ribosomes from one round of translation to another. The protein is Ribosome-recycling factor of Corynebacterium jeikeium (strain K411).